The primary structure comprises 173 residues: Acireductone dioxygenase (173 aa).

The interval 1–21 (MKFYYHDNDSSVDQCAPHDSG) is disordered. Fe(2+)-binding residues include His84, His86, Glu90, and His129. Ni(2+) is bound by residues His84, His86, Glu90, and His129.

It belongs to the acireductone dioxygenase (ARD) family. It depends on Fe(2+) as a cofactor. Requires Ni(2+) as cofactor.

It localises to the cytoplasm. Its subcellular location is the nucleus. The catalysed reaction is 1,2-dihydroxy-5-(methylsulfanyl)pent-1-en-3-one + O2 = 4-methylsulfanyl-2-oxobutanoate + formate + 2 H(+). The enzyme catalyses 1,2-dihydroxy-5-(methylsulfanyl)pent-1-en-3-one + O2 = 3-(methylsulfanyl)propanoate + CO + formate + 2 H(+). Its pathway is amino-acid biosynthesis; L-methionine biosynthesis via salvage pathway; L-methionine from S-methyl-5-thio-alpha-D-ribose 1-phosphate: step 5/6. Catalyzes 2 different reactions between oxygen and the acireductone 1,2-dihydroxy-3-keto-5-methylthiopentene (DHK-MTPene) depending upon the metal bound in the active site. Fe-containing acireductone dioxygenase (Fe-ARD) produces formate and 2-keto-4-methylthiobutyrate (KMTB), the alpha-ketoacid precursor of methionine in the methionine recycle pathway. Ni-containing acireductone dioxygenase (Ni-ARD) produces methylthiopropionate, carbon monoxide and formate, and does not lie on the methionine recycle pathway. This Yarrowia lipolytica (strain CLIB 122 / E 150) (Yeast) protein is Acireductone dioxygenase.